A 265-amino-acid chain; its full sequence is tRNA pseudouridine synthase A (265 aa).

D53 functions as the Nucleophile in the catalytic mechanism. Y111 is a substrate binding site.

It belongs to the tRNA pseudouridine synthase TruA family. As to quaternary structure, homodimer.

The catalysed reaction is uridine(38/39/40) in tRNA = pseudouridine(38/39/40) in tRNA. Functionally, formation of pseudouridine at positions 38, 39 and 40 in the anticodon stem and loop of transfer RNAs. This Acinetobacter baumannii (strain ATCC 17978 / DSM 105126 / CIP 53.77 / LMG 1025 / NCDC KC755 / 5377) protein is tRNA pseudouridine synthase A.